The chain runs to 1360 residues: KN motif and ankyrin repeat domains 1 (1360 aa).

Residues P30–K68 are KN motif; Interaction with TLN1. The Important for binding to TLN1 motif lies at L41–D44. The Nuclear export signal 1 (NES 1) motif lies at L43 to I52. Residues K65–K68 carry the Nuclear localization signal 1 (NLS 1) motif. The tract at residues R66–C103 is disordered. The span at S88–C103 shows a compositional bias: low complexity. The short motif at L125 to S134 is the Nuclear export signal 2 (NES 2) element. At S186 the chain carries Phosphoserine. A disordered region spans residues D221 to T253. Over residues P230–T253 the composition is skewed to polar residues. The tract at residues L244–R339 is interaction with PPFIBP1. Positions L260–S311 form a coiled coil. S325 carries the phosphoserine modification. 2 coiled-coil regions span residues F367–E394 and I453–D487. The Nuclear export signal 3 (NES 3) signature appears at L618 to L627. 2 disordered regions span residues S929–S954 and I983–G1053. 2 stretches are compositionally biased toward basic and acidic residues: residues A938–E947 and K985–G995. The Nuclear localization signal 2 (NLS 2) motif lies at K985–K998. Residues E1010–S1025 are compositionally biased toward low complexity. Acidic residues predominate over residues E1026–K1047. The segment at E1081 to D1360 is interaction with KIF21A. An ANK 0; degenerate repeat occupies K1117–V1154. ANK repeat units follow at residues N1169–H1199, A1203–A1236, A1241–I1270, E1274–D1306, and D1308–A1337. The segment at A1337–D1360 is disordered.

As to quaternary structure, part of a cortical microtubule stabilization complex (CMSC) composed of KANK1, PPFIA1, PPFIBP1, ERC1/ELKS, PHLDB2/LL5beta, CLASPs, KIF21A and possibly additional interactors; within CMSCs KANK1 and PHLDB2/LL5beta appear to be the core components for targeting of microtubule-binding proteins KIF21A and CLASPs, whereas PPFIA1, PPFIBP1 and ERC1/ELKS serve as scaffolds for protein clustering. Interacts (via KN motif) with TLN1 (via R7 domain); this mediates CMSC clustering around focal adhesions. Interacts (via CC1 domain, residues 244-339) with PPFIBP1. Interacts (via ANK repeats 1-5) with KIF21A (via residues 1142-1169). Interacts with YWHAQ; the interaction requires KANK1 phosphorylation at Ser-325 and is enhanced by growth factor stimulation. Interacts with YWHAB, YWHAG, YWHAE, YWHAH, YWHAZ and SFN; the interaction requires KANK1 phosphorylation at Ser-325. Interacts with ARFGEF1; however, colocalization cannot be experimentally confirmed. Interacts with BAIAP2. Interacts with CTNNB1. Interacts (via coiled coil domain) with DAAM1 (via coiled coil domain).

The protein resides in the cytoplasm. Its subcellular location is the cell cortex. It is found in the cell projection. It localises to the ruffle membrane. The protein localises to the nucleus. Its function is as follows. Adapter protein that links structural and signaling protein complexes positioned to guide microtubule and actin cytoskeleton dynamics during cell morphogenesis. At focal adhesions (FAs) rims, organizes cortical microtubule stabilizing complexes (CMSCs) and directly interacts with major FA component TLN1, forming macromolecular assemblies positioned to control microtubule-actin crosstalk at the cell edge. Recruits KIF21A in CMSCs at axonal growth cones and regulates axon guidance by suppressing microtubule growth without inducing microtubule disassembly once it reaches the cell cortex. Interacts with ARFGEF1 and participates in establishing microtubule-organizing center (MTOC) orientation and directed cell movement in wound healing. Regulates actin stress fiber formation and cell migration by inhibiting RHOA activation in response to growth factors; this function involves phosphorylation through PI3K/Akt signaling and may depend on the competitive interaction with 14-3-3 adapter proteins to sequester them from active complexes. Inhibits the formation of lamellipodia but not of filopodia; this function may depend on the competitive interaction with BAIAP2 to block its association with activated RAC1. Inhibits fibronectin-mediated cell spreading; this function is partially mediated by BAIAP2. In the nucleus, is involved in beta-catenin-dependent activation of transcription. During cell division, may regulate DAAM1-dependent RHOA activation that signals centrosome maturation and chromosomal segregation. May also be involved in contractile ring formation during cytokinesis. Potential tumor suppressor for renal cell carcinoma. The sequence is that of KN motif and ankyrin repeat domains 1 from Mus musculus (Mouse).